A 555-amino-acid chain; its full sequence is Solute carrier family 2, facilitated glucose transporter member 10 (555 aa).

At methionine 1–serine 15 the chain is on the cytoplasmic side. The helical transmembrane segment at leucine 16 to leucine 36 threads the bilayer. Over lysine 37–glutamate 48 the chain is Extracellular. The chain crosses the membrane as a helical span at residues alanine 49–isoleucine 69. At aspartate 70–asparagine 82 the chain is on the cytoplasmic side. Residues leucine 83 to valine 103 traverse the membrane as a helical segment. The Extracellular segment spans residues glycine 104 to arginine 105. The chain crosses the membrane as a helical span at residues valine 106–isoleucine 126. The Cytoplasmic portion of the chain corresponds to valine 127–arginine 132. A helical membrane pass occupies residues glycine 133–methionine 153. Residues asparagine 154–lysine 165 are Extracellular-facing. Residue asparagine 161 is glycosylated (N-linked (GlcNAc...) asparagine). The helical transmembrane segment at tyrosine 166 to proline 186 threads the bilayer. The Cytoplasmic segment spans residues serine 187–threonine 240. A helical membrane pass occupies residues leucine 241–tyrosine 261. Residue glutamine 250–glutamine 251 participates in D-glucose binding. Residues alanine 262–alanine 277 are Extracellular-facing. The N-linked (GlcNAc...) asparagine glycan is linked to asparagine 274. The chain crosses the membrane as a helical span at residues valine 278 to phenylalanine 298. Residues alanine 299–arginine 305 lie on the Cytoplasmic side of the membrane. The helical transmembrane segment at isoleucine 306–serine 326 threads the bilayer. The Extracellular portion of the chain corresponds to phenylalanine 327–threonine 415. N-linked (GlcNAc...) asparagine glycans are attached at residues asparagine 344, asparagine 351, asparagine 400, and asparagine 413. The helical transmembrane segment at isoleucine 416–phenylalanine 436 threads the bilayer. Residues glycine 437–asparagine 464 lie on the Cytoplasmic side of the membrane. Position 441 (tryptophan 441) interacts with D-glucose. The chain crosses the membrane as a helical span at residues tryptophan 465–glycine 483. Topologically, residues leucine 484–serine 485 are extracellular. A helical membrane pass occupies residues tryptophan 486–isoleucine 506. The Cytoplasmic portion of the chain corresponds to proline 507–serine 555. The interval glutamine 528–serine 555 is disordered.

It belongs to the major facilitator superfamily. Sugar transporter (TC 2.A.1.1) family. Glucose transporter subfamily.

It localises to the endomembrane system. Its subcellular location is the cytoplasm. It is found in the perinuclear region. It catalyses the reaction D-glucose(out) = D-glucose(in). Functionally, facilitative glucose transporter required for the development of the cardiovascular system. The protein is Solute carrier family 2, facilitated glucose transporter member 10 of Xenopus tropicalis (Western clawed frog).